Here is a 113-residue protein sequence, read N- to C-terminus: Colicin-E1 immunity protein (113 aa).

In terms of biological role, this protein is able to protect a cell, which harbors the plasmid ColE1 encoding colicin E1, against colicin E1. The polypeptide is Colicin-E1 immunity protein (imm) (Escherichia coli).